Consider the following 103-residue polypeptide: SOSS complex subunit C (103 aa).

This sequence belongs to the SOSS-C family. Belongs to the multiprotein complex Integrator. Component of the SOSS complex, composed of soss-b (soss-b1/nabp2 or soss-b2/nabp1), soss-a/ints3 and soss-c/inip.

The protein resides in the nucleus. In terms of biological role, component of the SOSS complex, a multiprotein complex that functions downstream of the MRN complex to promote DNA repair and G2/M checkpoint. The SOSS complex associates with single-stranded DNA at DNA lesions and influences diverse endpoints in the cellular DNA damage response including cell-cycle checkpoint activation, recombinational repair and maintenance of genomic stability. Required for efficient homologous recombination-dependent repair of double-strand breaks (DSBs). The sequence is that of SOSS complex subunit C (inip) from Danio rerio (Zebrafish).